Here is a 153-residue protein sequence, read N- to C-terminus: Bud site selection protein 25 (153 aa).

In terms of biological role, involved in bud site selection. Required for resistance to the DNA-damaging agent methyl methanesulfonate (MMS). The sequence is that of Bud site selection protein 25 from Saccharomyces cerevisiae (strain ATCC 204508 / S288c) (Baker's yeast).